We begin with the raw amino-acid sequence, 140 residues long: Nucleoside diphosphate kinase (140 aa).

Residues Lys-11, Phe-59, Arg-87, Thr-93, Arg-104, and Asn-114 each contribute to the ATP site. Residue His-117 is the Pros-phosphohistidine intermediate of the active site.

It belongs to the NDK family. Homotetramer. Mg(2+) serves as cofactor.

Its subcellular location is the cytoplasm. The enzyme catalyses a 2'-deoxyribonucleoside 5'-diphosphate + ATP = a 2'-deoxyribonucleoside 5'-triphosphate + ADP. It carries out the reaction a ribonucleoside 5'-diphosphate + ATP = a ribonucleoside 5'-triphosphate + ADP. Functionally, major role in the synthesis of nucleoside triphosphates other than ATP. The ATP gamma phosphate is transferred to the NDP beta phosphate via a ping-pong mechanism, using a phosphorylated active-site intermediate. The polypeptide is Nucleoside diphosphate kinase (Hyphomonas neptunium (strain ATCC 15444)).